Reading from the N-terminus, the 117-residue chain is MMEAKAVGKHLRISARKARLVADEVRGYDYKEAIDILRFTNKAASSMIINLLNSAVANAIQMNESLDPNSLFVKKIYVDDGPIMKRFRPRARGRASRIRKRLSHITVVVSEIEKKVS.

This sequence belongs to the universal ribosomal protein uL22 family. In terms of assembly, part of the 50S ribosomal subunit.

Its function is as follows. This protein binds specifically to 23S rRNA; its binding is stimulated by other ribosomal proteins, e.g. L4, L17, and L20. It is important during the early stages of 50S assembly. It makes multiple contacts with different domains of the 23S rRNA in the assembled 50S subunit and ribosome. Functionally, the globular domain of the protein is located near the polypeptide exit tunnel on the outside of the subunit, while an extended beta-hairpin is found that lines the wall of the exit tunnel in the center of the 70S ribosome. This Leptospira biflexa serovar Patoc (strain Patoc 1 / ATCC 23582 / Paris) protein is Large ribosomal subunit protein uL22.